A 190-amino-acid chain; its full sequence is Fe/S biogenesis protein NfuA (190 aa).

Residues cysteine 148 and cysteine 151 each contribute to the [4Fe-4S] cluster site.

It belongs to the NfuA family. In terms of assembly, homodimer. [4Fe-4S] cluster is required as a cofactor.

Its function is as follows. Involved in iron-sulfur cluster biogenesis. Binds a 4Fe-4S cluster, can transfer this cluster to apoproteins, and thereby intervenes in the maturation of Fe/S proteins. Could also act as a scaffold/chaperone for damaged Fe/S proteins. In Baumannia cicadellinicola subsp. Homalodisca coagulata, this protein is Fe/S biogenesis protein NfuA.